The sequence spans 143 residues: Holo-[acyl-carrier-protein] synthase (143 aa).

The Mg(2+) site is built by Asp-8 and Glu-62.

It belongs to the P-Pant transferase superfamily. AcpS family. It depends on Mg(2+) as a cofactor.

It localises to the cytoplasm. It catalyses the reaction apo-[ACP] + CoA = holo-[ACP] + adenosine 3',5'-bisphosphate + H(+). Its function is as follows. Transfers the 4'-phosphopantetheine moiety from coenzyme A to a Ser of acyl-carrier-protein. The chain is Holo-[acyl-carrier-protein] synthase from Cupriavidus metallidurans (strain ATCC 43123 / DSM 2839 / NBRC 102507 / CH34) (Ralstonia metallidurans).